The chain runs to 354 residues: Carbamoyl phosphate synthase arginine-specific small chain (354 aa).

Residues 1–163 (MKAYLHVASG…RTIETYGEGG (163 aa)) form a CPSase region. L-glutamine contacts are provided by Ser46, Gly213, and Gly215. The region spanning 165–352 (HLVLVDFGYK…LQTVFKGENV (188 aa)) is the Glutamine amidotransferase type-1 domain. Residue Cys240 is the Nucleophile of the active site. L-glutamine contacts are provided by Leu241, Gln244, Asn282, and Tyr285. Active-site residues include His325 and Glu327.

Belongs to the CarA family. As to quaternary structure, composed of two chains; the small (or glutamine) chain promotes the hydrolysis of glutamine to ammonia, which is used by the large (or ammonia) chain to synthesize carbamoyl phosphate. Tetramer of heterodimers (alpha,beta)4.

The enzyme catalyses hydrogencarbonate + L-glutamine + 2 ATP + H2O = carbamoyl phosphate + L-glutamate + 2 ADP + phosphate + 2 H(+). The catalysed reaction is L-glutamine + H2O = L-glutamate + NH4(+). It functions in the pathway amino-acid biosynthesis; L-arginine biosynthesis; carbamoyl phosphate from bicarbonate: step 1/1. Functionally, small subunit of the glutamine-dependent carbamoyl phosphate synthetase (CPSase). CPSase catalyzes the formation of carbamoyl phosphate from the ammonia moiety of glutamine, carbonate, and phosphate donated by ATP, constituting the first step of the biosynthetic pathway leading to arginine and/or urea. The small subunit (glutamine amidotransferase) binds and cleaves glutamine to supply the large subunit with the substrate ammonia. This is Carbamoyl phosphate synthase arginine-specific small chain from Geobacillus stearothermophilus (Bacillus stearothermophilus).